The chain runs to 248 residues: Probable transcriptional regulatory protein OCAR_7305/OCA5_c08120 (248 aa).

The protein belongs to the TACO1 family.

It localises to the cytoplasm. The chain is Probable transcriptional regulatory protein OCAR_7305/OCA5_c08120 from Afipia carboxidovorans (strain ATCC 49405 / DSM 1227 / KCTC 32145 / OM5) (Oligotropha carboxidovorans).